The sequence spans 120 residues: MKILFVLISILYAVYCFSSEEDVDSAYLANELEPVEDINSEQYAALEPKEEQERSCAGMGQDCKDDCDCCLNIATCNCWFGRYFCSCTFGDYQTCLRKKGKCKRNRPQSCPRSNLNRKKG.

Residues 1–16 (MKILFVLISILYAVYC) form the signal peptide. Positions 17 to 54 (FSSEEDVDSAYLANELEPVEDINSEQYAALEPKEEQER) are excised as a propeptide. 4 disulfides stabilise this stretch: cysteine 56-cysteine 70, cysteine 63-cysteine 76, cysteine 69-cysteine 87, and cysteine 78-cysteine 85. In terms of domain architecture, Agouti spans 56–95 (CAGMGQDCKDDCDCCLNIATCNCWFGRYFCSCTFGDYQTC).

This sequence belongs to the neurotoxin 05 (agouti) family. In terms of processing, contains 6 disulfide bonds. In terms of tissue distribution, expressed by the venom gland.

It localises to the secreted. This Lycosa singoriensis (Wolf spider) protein is U13-lycotoxin-Ls1f.